The primary structure comprises 428 residues: Probable RNase MJ4 (428 aa).

Zn(2+) contacts are provided by histidine 57, histidine 59, aspartate 61, histidine 62, histidine 143, aspartate 165, and histidine 397.

Belongs to the metallo-beta-lactamase superfamily. RNA-metabolizing metallo-beta-lactamase-like family. The cofactor is Zn(2+).

Its function is as follows. Probably an RNase. This Methanocaldococcus jannaschii (strain ATCC 43067 / DSM 2661 / JAL-1 / JCM 10045 / NBRC 100440) (Methanococcus jannaschii) protein is Probable RNase MJ4.